Reading from the N-terminus, the 200-residue chain is Integrin beta-1-binding protein 1 (200 aa).

The segment covering 1-10 has biased composition (basic residues); the sequence is MFRKGKKRHS. Residues 1-56 are disordered; it reads MFRKGKKRHSSSSSQSSEISTKSKSVDSSLGGLSRSSTVASLDTDSTKSSGQSNNN. The Nuclear localization signal signature appears at 6–7; sequence KK. Residues 11–29 show a composition bias toward low complexity; it reads SSSSQSSEISTKSKSVDSS. Residues 34-56 show a composition bias toward polar residues; it reads SRSSTVASLDTDSTKSSGQSNNN. T38 bears the Phosphothreonine; by CaMK2 mark. A Phosphoserine modification is found at S41. The region spanning 58-200 is the PID domain; that stretch reads DTCAEFRIKY…FDSVLTSEKP (143 aa). The tract at residues 136–139 is interaction with KRIT1; that stretch reads YLII. An interaction with ITGB1 region spans residues 139–141; sequence IRM.

In terms of assembly, interacts (via N-terminus and PTB domain) with ROCK1. Found in a complex, at least composed of ITGB1BP1, KRIT1 and RAP1A. Interacts (via C-terminal region) with ITGB1 (via C-terminal cytoplasmic tail); the interaction prevents talin TLN1 binding to ITGB1 and KRIT1 and ITGB1 compete for the same binding site. Interacts with KRIT1 (via N-terminal NPXY motif); the interaction induces the opening conformation of KRIT1 and KRIT1 and ITGB1 compete for the same binding site. Isoform 2 does not interact with ITGB1. Interacts with CDC42 (GTP- or GDP-bound form); the interaction is increased with the CDC42-membrane bound forms and prevents both CDC42 activation and cell spreading. Interacts (via C-terminal domain region) with NME2. Interacts with FERMT2 and RAC1. Phosphorylation at Thr-38 seems to enhance integrin alpha5beta1-mediated cell adhesion. The degree of phosphorylation is regulated by integrin-dependent cell-matrix interaction.

It localises to the nucleus. Its subcellular location is the cytoplasm. It is found in the cytoskeleton. The protein resides in the cell membrane. The protein localises to the cell projection. It localises to the lamellipodium. Its subcellular location is the ruffle. In terms of biological role, key regulator of the integrin-mediated cell-matrix interaction signaling by binding to the ITGB1 cytoplasmic tail and preventing the activation of integrin alpha-5/beta-1 (heterodimer of ITGA5 and ITGB1) by talin or FERMT1. Plays a role in cell proliferation, differentiation, spreading, adhesion and migration in the context of mineralization and bone development and angiogenesis. Stimulates cellular proliferation in a fibronectin-dependent manner. Involved in the regulation of beta-1 integrin-containing focal adhesion (FA) site dynamics by controlling its assembly rate during cell adhesion; inhibits beta-1 integrin clustering within FA by directly competing with talin TLN1, and hence stimulates osteoblast spreading and migration in a fibronectin- and/or collagen-dependent manner. Acts as a guanine nucleotide dissociation inhibitor (GDI) by regulating Rho family GTPases during integrin-mediated cell matrix adhesion; reduces the level of active GTP-bound form of both CDC42 and RAC1 GTPases upon cell adhesion to fibronectin. Stimulates the release of active CDC42 from the membranes to maintain it in an inactive cytoplasmic pool. Participates in the translocation of the Rho-associated protein kinase ROCK1 to membrane ruffles at cell leading edges of the cell membrane, leading to an increase of myoblast cell migration on laminin. Plays a role in bone mineralization at a late stage of osteoblast differentiation; modulates the dynamic formation of focal adhesions into fibrillar adhesions, which are adhesive structures responsible for fibronectin deposition and fibrillogenesis. Plays a role in blood vessel development; acts as a negative regulator of angiogenesis by attenuating endothelial cell proliferation and migration, lumen formation and sprouting angiogenesis by promoting AKT phosphorylation and inhibiting ERK1/2 phosphorylation through activation of the Notch signaling pathway. Promotes transcriptional activity of the MYC promoter. The protein is Integrin beta-1-binding protein 1 (ITGB1BP1) of Bos taurus (Bovine).